We begin with the raw amino-acid sequence, 351 residues long: DNA polymerase IV (351 aa).

Positions 4–185 constitute a UmuC domain; that stretch reads IIHIDMDCFY…LPLRKIPGVG (182 aa). Mg(2+)-binding residues include aspartate 8 and aspartate 103. Glutamate 104 is a catalytic residue.

Belongs to the DNA polymerase type-Y family. Monomer. Requires Mg(2+) as cofactor.

Its subcellular location is the cytoplasm. It carries out the reaction DNA(n) + a 2'-deoxyribonucleoside 5'-triphosphate = DNA(n+1) + diphosphate. Poorly processive, error-prone DNA polymerase involved in untargeted mutagenesis. Copies undamaged DNA at stalled replication forks, which arise in vivo from mismatched or misaligned primer ends. These misaligned primers can be extended by PolIV. Exhibits no 3'-5' exonuclease (proofreading) activity. May be involved in translesional synthesis, in conjunction with the beta clamp from PolIII. The polypeptide is DNA polymerase IV (Photorhabdus laumondii subsp. laumondii (strain DSM 15139 / CIP 105565 / TT01) (Photorhabdus luminescens subsp. laumondii)).